The primary structure comprises 197 residues: 3-isopropylmalate dehydratase small subunit (197 aa).

It belongs to the LeuD family. LeuD type 1 subfamily. Heterodimer of LeuC and LeuD.

It carries out the reaction (2R,3S)-3-isopropylmalate = (2S)-2-isopropylmalate. It participates in amino-acid biosynthesis; L-leucine biosynthesis; L-leucine from 3-methyl-2-oxobutanoate: step 2/4. Catalyzes the isomerization between 2-isopropylmalate and 3-isopropylmalate, via the formation of 2-isopropylmaleate. The chain is 3-isopropylmalate dehydratase small subunit from Mycobacterium sp. (strain JLS).